We begin with the raw amino-acid sequence, 531 residues long: MSAYQNEIKAVAALKEKNGSSWSAINPEYAARMRIQNRFKTGLDIAKYTAAIMRKDMAEYDADSSVYTQSLGCWHGFIGQQKLISIKKHLKTTNKRYLYLSGWMVAALRSDFGPLPDQSMHEKTAVSGLIEELYTFLRQADARELDLLFTGLDAARAAGDKAKEAELLAQIDNFETHVVPIIADIDAGFGNAEATYLLAKKMIEAGACCIQIENQVSDEKQCGHQDGKVTVPHIDFLAKINAVRYAFLELGVDDGVIVARTDSLGAGLTKQIAVTNEPGDLGDLYNSFLDCEEISESELGNGDVVIKREGKLLRPKRLASNLFQFRKGTGEDRCVLDCITSLQNGADLLWIETEKPHVGQIKAMVDRIREVIPNAKLVYNNSPSFNWTLNFRQQVFDAFVAEGKDVSAYDRNKLMSVEYDDTELAKVADEKIRTFQRDGSAHAGIFHHLITLPTYHTAALSTDNLAKGYFADEGMLAYVKGVQRQELRQGIACVKHQNMAGSDIGDNHKEYFAGEAALKASGKDNTMNQFH.

101 to 103 (SGW) serves as a coordination point for substrate. D184 lines the Mg(2+) pocket. C222 (proton acceptor) is an active-site residue. Substrate-binding positions include 223–224 (GH), 380–384 (NNSPS), and T451.

Belongs to the isocitrate lyase/PEP mutase superfamily. Isocitrate lyase family. As to quaternary structure, homotetramer. Mg(2+) is required as a cofactor.

It catalyses the reaction D-threo-isocitrate = glyoxylate + succinate. It functions in the pathway carbohydrate metabolism; glyoxylate cycle; (S)-malate from isocitrate: step 1/2. Its function is as follows. Involved in the metabolic adaptation in response to environmental changes. Catalyzes the reversible formation of succinate and glyoxylate from isocitrate, a key step of the glyoxylate cycle, which operates as an anaplerotic route for replenishing the tricarboxylic acid cycle during growth on fatty acid substrates. This Pseudomonas aeruginosa (strain ATCC 15692 / DSM 22644 / CIP 104116 / JCM 14847 / LMG 12228 / 1C / PRS 101 / PAO1) protein is Isocitrate lyase.